The primary structure comprises 148 residues: Transcription antitermination protein NusB (148 aa).

It belongs to the NusB family.

Functionally, involved in transcription antitermination. Required for transcription of ribosomal RNA (rRNA) genes. Binds specifically to the boxA antiterminator sequence of the ribosomal RNA (rrn) operons. The polypeptide is Transcription antitermination protein NusB (Aquifex aeolicus (strain VF5)).